A 184-amino-acid chain; its full sequence is MSRLAKKPINIPQGVTVEVNDGTVKVRGPKGELTQDFLPYVKIEIEDGKVWIRPNEAQVRRKSDWRKVKMFQGTYWSLIRNMVIGVTEGYKKELEIVGIGYRAQLQGNTLVMNLGYAHPVVYEIPSDVKVEVPAPNRIVVSGIDKQRVGQVAAEIRAFRPPNVYTGKGIRYVGEVVRQKEGKKA.

It belongs to the universal ribosomal protein uL6 family. In terms of assembly, part of the 50S ribosomal subunit.

Its function is as follows. This protein binds to the 23S rRNA, and is important in its secondary structure. It is located near the subunit interface in the base of the L7/L12 stalk, and near the tRNA binding site of the peptidyltransferase center. The polypeptide is Large ribosomal subunit protein uL6 (Thermotoga neapolitana (strain ATCC 49049 / DSM 4359 / NBRC 107923 / NS-E)).